The following is a 219-amino-acid chain: ATP-dependent Clp protease proteolytic subunit 1 (219 aa).

S113 functions as the Nucleophile in the catalytic mechanism. Residue H138 is part of the active site.

This sequence belongs to the peptidase S14 family. Fourteen ClpP subunits assemble into 2 heptameric rings which stack back to back to give a disk-like structure with a central cavity, resembling the structure of eukaryotic proteasomes.

The protein resides in the cytoplasm. The catalysed reaction is Hydrolysis of proteins to small peptides in the presence of ATP and magnesium. alpha-casein is the usual test substrate. In the absence of ATP, only oligopeptides shorter than five residues are hydrolyzed (such as succinyl-Leu-Tyr-|-NHMec, and Leu-Tyr-Leu-|-Tyr-Trp, in which cleavage of the -Tyr-|-Leu- and -Tyr-|-Trp bonds also occurs).. Functionally, cleaves peptides in various proteins in a process that requires ATP hydrolysis. Has a chymotrypsin-like activity. Plays a major role in the degradation of misfolded proteins. Probably partially responsible for degradation of ECF sigma factor SigR prime. This Streptomyces coelicolor (strain ATCC BAA-471 / A3(2) / M145) protein is ATP-dependent Clp protease proteolytic subunit 1.